A 458-amino-acid chain; its full sequence is MQPATLQWSSYVLQLRVTTTAILKPGELRLFKCGLGITPPSSAVVCICRDESSFTSSPFTYIDPKDYGNIPFAVQNISDLDLDLSRLPIVLNIFALPHANVNISNLPVQRIEAHDRHIIPHGQCDAKFVIYGPLTRIKIQVADIRWIEQTPEEPTRYSFKAEIWVNLQNTPLDQIFKTGNIEFISHKNVYISRILLCGNLLILKANYENDYLLDDNFYPEQLAIQISLTPQTADITLSQNQETLLKCNTHSITVCATKNIIPNTVTPVHCSFNTIFNSNSNFTGLFIPKLLLGISTTTGIWDETRPLYITMKAFKKNRRINYSQPIGVVYFFPKQILPPGNNVEFNWTEASKIYVNTESPNGPVRNTVTFTNQAVLRTPSLSTVANLTPDINMGIFLSSLRVAFDTAHMVPLHFSLKPGESTRMEFMPPGTPQNLTILEGDVGIHFIPCHNHSHRSSP.

N76, N102, N281, N321, N346, N434, and N451 each carry an N-linked (GlcNAc...) asparagine; by host glycan.

It belongs to the herpesviridae UL82 family.

The chain is Protein U54 (U54) from Homo sapiens (Human).